The primary structure comprises 314 residues: Putative integrase/recombinase y4rB (314 aa).

In terms of domain architecture, Core-binding (CB) spans 2-79 (STFRQAVQEY…YVRVFARYRA (78 aa)). Residues 100–304 (ARPYLYSKED…SPELMKEAMR (205 aa)) form the Tyr recombinase domain. Active-site residues include arginine 147, lysine 172, histidine 248, arginine 251, and histidine 282. The active-site O-(3'-phospho-DNA)-tyrosine intermediate is tyrosine 291.

Belongs to the 'phage' integrase family.

In Sinorhizobium fredii (strain NBRC 101917 / NGR234), this protein is Putative integrase/recombinase y4rB.